The sequence spans 229 residues: Cytidylate kinase (229 aa).

Residue Gly12–Thr20 coordinates ATP.

The protein belongs to the cytidylate kinase family. Type 1 subfamily.

The protein resides in the cytoplasm. The catalysed reaction is CMP + ATP = CDP + ADP. It catalyses the reaction dCMP + ATP = dCDP + ADP. The protein is Cytidylate kinase of Pseudomonas syringae pv. syringae (strain B728a).